The sequence spans 203 residues: Small ribosomal subunit protein uS4 (203 aa).

An S4 RNA-binding domain is found at 93 to 156; that stretch reads RRLDNVVYRL…AKVPAILEAV (64 aa).

This sequence belongs to the universal ribosomal protein uS4 family. In terms of assembly, part of the 30S ribosomal subunit. Contacts protein S5. The interaction surface between S4 and S5 is involved in control of translational fidelity.

Functionally, one of the primary rRNA binding proteins, it binds directly to 16S rRNA where it nucleates assembly of the body of the 30S subunit. With S5 and S12 plays an important role in translational accuracy. The polypeptide is Small ribosomal subunit protein uS4 (Streptococcus thermophilus (strain CNRZ 1066)).